We begin with the raw amino-acid sequence, 364 residues long: tRNA 2-selenouridine synthase (364 aa).

In terms of domain architecture, Rhodanese spans 14 to 137; it reads LIADTPIIDV…LRQTAIQATI (124 aa). Cys-97 functions as the S-selanylcysteine intermediate in the catalytic mechanism.

Belongs to the SelU family. Monomer.

It carries out the reaction 5-methylaminomethyl-2-thiouridine(34) in tRNA + selenophosphate + (2E)-geranyl diphosphate + H2O + H(+) = 5-methylaminomethyl-2-selenouridine(34) in tRNA + (2E)-thiogeraniol + phosphate + diphosphate. The enzyme catalyses 5-methylaminomethyl-2-thiouridine(34) in tRNA + (2E)-geranyl diphosphate = 5-methylaminomethyl-S-(2E)-geranyl-thiouridine(34) in tRNA + diphosphate. It catalyses the reaction 5-methylaminomethyl-S-(2E)-geranyl-thiouridine(34) in tRNA + selenophosphate + H(+) = 5-methylaminomethyl-2-(Se-phospho)selenouridine(34) in tRNA + (2E)-thiogeraniol. The catalysed reaction is 5-methylaminomethyl-2-(Se-phospho)selenouridine(34) in tRNA + H2O = 5-methylaminomethyl-2-selenouridine(34) in tRNA + phosphate. Involved in the post-transcriptional modification of the uridine at the wobble position (U34) of tRNA(Lys), tRNA(Glu) and tRNA(Gln). Catalyzes the conversion of 2-thiouridine (S2U-RNA) to 2-selenouridine (Se2U-RNA). Acts in a two-step process involving geranylation of 2-thiouridine (S2U) to S-geranyl-2-thiouridine (geS2U) and subsequent selenation of the latter derivative to 2-selenouridine (Se2U) in the tRNA chain. The chain is tRNA 2-selenouridine synthase from Escherichia coli (strain SMS-3-5 / SECEC).